A 437-amino-acid chain; its full sequence is MLRARKGLWVLLSVLLAFWIERAISFPVRHHKRSRNGVYVENQVQNHLADSHPHQRRWLQHHSTGVLPLPEPEEESKPFVLDFKNLPDLANADIGSQNPNIQVTIEVLDDPPMDVEMDLVKEWSNDWSTSSPSSTVEWLGGKKLFWPLFWGYTDADSGEDGTGQAEDEEDDYDYDSGEPIPSGLGKTDGDWTHNRYEEKEEEWSTWSPCSVTCGHGNQTRSRSCGDFCTSTESQSCDLVPCPDDWNSVGHVFPFEMENGTEPYGTDVGSCEKWLNCKSEFLQRYLQQVFTELPNCPCSYPSHVSNNIVSLLDVGHERSFQWRDASGPKERLDIYKPSARSCLRSGLSKNGTTLAAQHCCYDDNKQLITRGKGAGTPNLISTEFSPELHFKVDVLPWILCKGDWSRFHAVRPPNNGLHCMENPQQDIFMNELEEAREY.

The first 25 residues, 1 to 25, serve as a signal peptide directing secretion; sequence MLRARKGLWVLLSVLLAFWIERAIS. Positions 156 to 191 are disordered; that stretch reads DSGEDGTGQAEDEEDDYDYDSGEPIPSGLGKTDGDW. Acidic residues predominate over residues 165–176; the sequence is AEDEEDDYDYDS. A TSP type-1 domain is found at 197–242; the sequence is EEKEEEWSTWSPCSVTCGHGNQTRSRSCGDFCTSTESQSCDLVPCP. 3 disulfide bridges follow: cysteine 209/cysteine 236, cysteine 213/cysteine 241, and cysteine 224/cysteine 228. Asparagine 217 carries an N-linked (GlcNAc...) asparagine glycan. N-linked (GlcNAc...) asparagine glycans are attached at residues asparagine 258 and asparagine 349. Positions 262–425 constitute an AMOP domain; it reads PYGTDVGSCE…LHCMENPQQD (164 aa).

The protein belongs to the isthmin family.

It is found in the secreted. The polypeptide is Isthmin-2 (ism2) (Danio rerio (Zebrafish)).